Reading from the N-terminus, the 598-residue chain is Arginine--tRNA ligase (598 aa).

The 'HIGH' region motif lies at 135–145; the sequence is ANPTGPIHIGG. Residues 229–248 are disordered; the sequence is VDGGTDEKGEPLGEGDSEQR. Positions 231 to 248 are enriched in basic and acidic residues; it reads GGTDEKGEPLGEGDSEQR.

The protein belongs to the class-I aminoacyl-tRNA synthetase family. Monomer.

The protein localises to the cytoplasm. The catalysed reaction is tRNA(Arg) + L-arginine + ATP = L-arginyl-tRNA(Arg) + AMP + diphosphate. The polypeptide is Arginine--tRNA ligase (Bifidobacterium animalis subsp. lactis (strain AD011)).